The primary structure comprises 121 residues: Large-conductance mechanosensitive channel (121 aa).

A run of 2 helical transmembrane segments spans residues 14–34 and 67–87; these read VLDLAVGVIIGAAFTALVKSL and GAFLNDVINFVITAFVIFVLI.

This sequence belongs to the MscL family. Homopentamer.

Its subcellular location is the cell membrane. Functionally, channel that opens in response to stretch forces in the membrane lipid bilayer. May participate in the regulation of osmotic pressure changes within the cell. The protein is Large-conductance mechanosensitive channel of Lactococcus lactis subsp. cremoris (strain SK11).